Here is a 344-residue protein sequence, read N- to C-terminus: Ferredoxin--NADP reductase (344 aa).

FAD is bound by residues D36, Q44, Y49, V89, F127, D291, and T332.

This sequence belongs to the ferredoxin--NADP reductase type 2 family. In terms of assembly, homodimer. Requires FAD as cofactor.

It catalyses the reaction 2 reduced [2Fe-2S]-[ferredoxin] + NADP(+) + H(+) = 2 oxidized [2Fe-2S]-[ferredoxin] + NADPH. The chain is Ferredoxin--NADP reductase from Beijerinckia indica subsp. indica (strain ATCC 9039 / DSM 1715 / NCIMB 8712).